A 140-amino-acid chain; its full sequence is MKAFIVLVALACAAPAFGRTMDRCSLAREMSNLGVPRDQLARWACIAEHESSYRTGVVGPENYNGSNDYGIFQINDYYWCAPPSGRFSYNECGLSCNALLTDDITHSVRCAQKVLSQQGWSAWSTWHYCSGWLPSIDDCF.

The signal sequence occupies residues 1–18 (MKAFIVLVALACAAPAFG). The 122-residue stretch at 19–140 (RTMDRCSLAR…GWLPSIDDCF (122 aa)) folds into the C-type lysozyme domain. 4 disulfide bridges follow: C24–C139, C45–C129, C80–C96, and C92–C110. Residues E50 and D68 contribute to the active site.

It belongs to the glycosyl hydrolase 22 family. As to expression, found in the midgut.

The catalysed reaction is Hydrolysis of (1-&gt;4)-beta-linkages between N-acetylmuramic acid and N-acetyl-D-glucosamine residues in a peptidoglycan and between N-acetyl-D-glucosamine residues in chitodextrins.. Functionally, unlikely to play an active role in the humoral immune defense. May have a function in the digestion of bacteria in the food. In Drosophila melanogaster (Fruit fly), this protein is Lysozyme D (LysD).